The following is a 453-amino-acid chain: GTPase Der (453 aa).

EngA-type G domains are found at residues 4 to 169 (PIVA…PPAD) and 178 to 353 (IGVA…EQHR). GTP-binding positions include 10–17 (GRPNVGKS), 57–61 (DTGGL), 120–123 (NKCE), 184–191 (GRPNVGKS), 231–235 (DTAGI), and 296–299 (NKWD). Positions 354–439 (RRVGTSVINE…PIRLFWRGKK (86 aa)) constitute a KH-like domain.

It belongs to the TRAFAC class TrmE-Era-EngA-EngB-Septin-like GTPase superfamily. EngA (Der) GTPase family. As to quaternary structure, associates with the 50S ribosomal subunit.

GTPase that plays an essential role in the late steps of ribosome biogenesis. The protein is GTPase Der of Synechococcus sp. (strain ATCC 27144 / PCC 6301 / SAUG 1402/1) (Anacystis nidulans).